The chain runs to 239 residues: Aspartate/glutamate leucyltransferase (239 aa).

This sequence belongs to the R-transferase family. Bpt subfamily.

The protein resides in the cytoplasm. The enzyme catalyses N-terminal L-glutamyl-[protein] + L-leucyl-tRNA(Leu) = N-terminal L-leucyl-L-glutamyl-[protein] + tRNA(Leu) + H(+). It carries out the reaction N-terminal L-aspartyl-[protein] + L-leucyl-tRNA(Leu) = N-terminal L-leucyl-L-aspartyl-[protein] + tRNA(Leu) + H(+). In terms of biological role, functions in the N-end rule pathway of protein degradation where it conjugates Leu from its aminoacyl-tRNA to the N-termini of proteins containing an N-terminal aspartate or glutamate. The polypeptide is Aspartate/glutamate leucyltransferase (Alkalilimnicola ehrlichii (strain ATCC BAA-1101 / DSM 17681 / MLHE-1)).